The chain runs to 50 residues: Putative protein HokG (50 aa).

Residues Tyr-5–Gly-25 traverse the membrane as a helical segment.

Belongs to the Hok/Gef family.

The protein localises to the cell inner membrane. Its function is as follows. Toxic component of a type I toxin-antitoxin (TA) system. When overexpressed kills cells within minutes; causes collapse of the transmembrane potential and arrest of respiration. Its toxic effect is probably neutralized by an antisense antitoxin Sok RNA. This chain is Putative protein HokG (hokG), found in Escherichia coli O157:H7.